The chain runs to 360 residues: Cell division protein DivIB (360 aa).

The segment at 1 to 54 is disordered; sequence MTEKDSNVEESVLEVEQASQVELDSEQISPAEKESVLAEEKEFSTDVDIPEMTA. Over 1–139 the chain is Cytoplasmic; the sequence is MTEKDSNVEE…VDIPSKVVWK (139 aa). Over residues 17–28 the composition is skewed to polar residues; the sequence is QASQVELDSEQI. Residues 31-44 show a composition bias toward basic and acidic residues; sequence AEKESVLAEEKEFS. The chain crosses the membrane as a helical span at residues 140-160; the sequence is AIPVLVTSLLLAALALYFISP. The Extracellular portion of the chain corresponds to 161-360; the sequence is TSKKKQIEVV…MEVGIYRYAS (200 aa). The POTRA domain maps to 162 to 233; that stretch reads SKKKQIEVVG…ATFTIHIKEY (72 aa).

This sequence belongs to the FtsQ/DivIB family. DivIB subfamily.

The protein localises to the cell membrane. In terms of biological role, cell division protein that may be involved in stabilizing or promoting the assembly of the division complex. This Streptococcus suis (strain GZ1) protein is Cell division protein DivIB.